A 167-amino-acid chain; its full sequence is LIM domain transcription factor LMO4.1 (167 aa).

Positions 1-17 (MVNNRVTESTTTAVSSN) are enriched in polar residues. Positions 1 to 20 (MVNNRVTESTTTAVSSNGGP) are disordered. LIM zinc-binding domains follow at residues 22–84 (KACA…LFGS) and 86–148 (GACS…GLLS).

Functionally, acts as a positive cofactor of GATA transcription factors to establish the identity of the ventral mesoderm during gastrulation. Down-regulation in the dorsal mesoderm is necessary for the proper formation of this territory since, when present, lmo4 may bind ldb1 and restrict the availability of this cofactor for Spemman organizer transcription factors. At neurula stages, suppresses primary neuron differentiation and modulates gene expression at the Isthmic Organizer of the midbrain-hindbrain boundary. The polypeptide is LIM domain transcription factor LMO4.1 (lmo4.1) (Xenopus tropicalis (Western clawed frog)).